Consider the following 233-residue polypeptide: MGQKVHPNGIRLGIVKPWNSTWFANTKEFADNLDSDFKVRQYLTKELAKASVSRIVIERPAKSIRVTIHTARPGIVIGKKGEDVEKLRKVVADIAGVPAQINIAEVRKPELDAKLVADSITSQLERRVMFRRAMKRAVQNAMRLGAKGIKVEVSGRLGGAEIARTEWYREGRVPLHTLRADIDYNTSEAHTTYGVIGVKVWIFKGEILGGMAAVEQPEKPAAQPKKQQRKGRK.

Residues 39–107 (VRQYLTKELA…PAQINIAEVR (69 aa)) enclose the KH type-2 domain.

It belongs to the universal ribosomal protein uS3 family. Part of the 30S ribosomal subunit. Forms a tight complex with proteins S10 and S14.

In terms of biological role, binds the lower part of the 30S subunit head. Binds mRNA in the 70S ribosome, positioning it for translation. The sequence is that of Small ribosomal subunit protein uS3 from Citrobacter koseri (strain ATCC BAA-895 / CDC 4225-83 / SGSC4696).